Here is a 257-residue protein sequence, read N- to C-terminus: Protein UL24 homolog (257 aa).

The segment at 193–257 (KKPKMDRGGK…PRAGPACSGP (65 aa)) is disordered.

Belongs to the herpesviridae UL24 family.

The protein resides in the virion. It is found in the host cytoplasm. It localises to the host nucleus. The protein localises to the host nucleolus. Its subcellular location is the host Golgi apparatus. May participate in nuclear egress of viral particles. Plays a role in the dispersal of several host nucleolar proteins including NCL/nucleolin and NPM1. Since deletion of host NCL/nucleolin negatively impact on nuclear egress, UL24 supposedly acts on this process through its effect on host nucleoli. Induces cell cycle arrest in host cells at the G2/M phase following by apoptosis. The mechanism involves the inhibition of host mitotic complex cyclin-B/CDK1. This Homo sapiens (Human) protein is Protein UL24 homolog (ORF20).